Here is a 100-residue protein sequence, read N- to C-terminus: Putative septation protein SpoVG (100 aa).

The protein belongs to the SpoVG family.

Could be involved in septation. In Staphylococcus haemolyticus (strain JCSC1435), this protein is Putative septation protein SpoVG.